The chain runs to 1030 residues: Importin beta-like SAD2 homolog (1030 aa).

Residue Met1 is modified to N-acetylmethionine. The Importin N-terminal domain occupies 25–99 (AEQSLNQLQH…RNQILVFVSQ (75 aa)). 2 disordered regions span residues 886-928 (AAKA…GSTL) and 940-964 (SYSD…PIDE). Composition is skewed to acidic residues over residues 890–924 (EEEE…DETD) and 943–964 (DDDD…PIDE).

It belongs to the importin beta family.

It localises to the cytoplasm. Its subcellular location is the nucleus. Functionally, functions probably in nuclear protein import, either by acting as autonomous nuclear transport receptor or as an adapter-like protein in association with other importin subunits. This chain is Importin beta-like SAD2 homolog, found in Arabidopsis thaliana (Mouse-ear cress).